A 180-amino-acid polypeptide reads, in one-letter code: Adenosine 5'-phosphosulfate reductase (180 aa).

Positions 57, 58, 140, and 143 each coordinate [4Fe-4S] cluster. Cys-168 functions as the Nucleophile; cysteine thiosulfonate intermediate in the catalytic mechanism.

The protein belongs to the PAPS reductase family. CysH subfamily. It depends on [4Fe-4S] cluster as a cofactor.

It is found in the cytoplasm. It catalyses the reaction [thioredoxin]-disulfide + sulfite + AMP + 2 H(+) = adenosine 5'-phosphosulfate + [thioredoxin]-dithiol. It participates in sulfur metabolism; hydrogen sulfide biosynthesis; sulfite from sulfate. Functionally, catalyzes the formation of sulfite from adenosine 5'-phosphosulfate (APS) using thioredoxin as an electron donor. The protein is Adenosine 5'-phosphosulfate reductase of Rhizobium tropici.